We begin with the raw amino-acid sequence, 401 residues long: Nodulation protein E (401 aa).

Positions 2 to 400 constitute a Ketosynthase family 3 (KS3) domain; that stretch reads DRRVVITGIG…GTNAVLAFRQ (399 aa). Residues C162, H294, and H331 each act as for beta-ketoacyl synthase activity in the active site. The chain crosses the membrane as a helical span at residues 329 to 348; the sequence is HAHCLGAASALEMIACVMAI.

The protein belongs to the thiolase-like superfamily. Beta-ketoacyl-ACP synthases family.

Its subcellular location is the cell inner membrane. Functionally, proposed to synthesize NOD factor fatty acyl chain. Involved in the synthesis of a highly unsaturated fatty acid moiety, which forms part of a lipo-oligosaccharide that is responsible for host specificity. The sequence is that of Nodulation protein E (nodE) from Rhizobium leguminosarum bv. trifolii.